The chain runs to 540 residues: Chaperonin GroEL (540 aa).

ATP contacts are provided by residues 29 to 32 (TLGP), 86 to 90 (DGTTT), glycine 413, 476 to 478 (NAA), and aspartate 492.

The protein belongs to the chaperonin (HSP60) family. In terms of assembly, forms a cylinder of 14 subunits composed of two heptameric rings stacked back-to-back. Interacts with the co-chaperonin GroES.

It is found in the cytoplasm. It catalyses the reaction ATP + H2O + a folded polypeptide = ADP + phosphate + an unfolded polypeptide.. In terms of biological role, together with its co-chaperonin GroES, plays an essential role in assisting protein folding. The GroEL-GroES system forms a nano-cage that allows encapsulation of the non-native substrate proteins and provides a physical environment optimized to promote and accelerate protein folding. The sequence is that of Chaperonin GroEL from Streptococcus sanguinis.